The sequence spans 164 residues: F-box protein At4g05010 (164 aa).

The segment at 38–57 (SKRAPENDSPPVKRPSHETT) is disordered. Residues 61–109 (RSLLETLHQDILIRVLCHVDHEDLATLKRVSKTIRKAVIEAKKSHFDYS) enclose the F-box domain.

This Arabidopsis thaliana (Mouse-ear cress) protein is F-box protein At4g05010.